The chain runs to 37 residues: Large ribosomal subunit protein bL36 (37 aa).

Belongs to the bacterial ribosomal protein bL36 family.

In Clostridioides difficile (strain 630) (Peptoclostridium difficile), this protein is Large ribosomal subunit protein bL36.